We begin with the raw amino-acid sequence, 47 residues long: Lysis protein for colicins E2 and E3 (47 aa).

An N-terminal signal peptide occupies residues M1 to A19. Residue C20 is the site of N-palmitoyl cysteine attachment. Residue C20 is the site of S-diacylglycerol cysteine attachment.

It is found in the cell outer membrane. Functionally, lysis proteins are required for both colicin release and partial cell lysis. The sequence is that of Lysis protein for colicins E2 and E3 (hic) from Escherichia coli.